The sequence spans 502 residues: Alpha-globin transcription factor CP2 (502 aa).

The 240-residue stretch at E61–S300 folds into the Grh/CP2 DB domain. The interval E133 to C395 is DNA-binding. Disordered regions lie at residues F238 to S268 and F294 to L325. The segment covering K241 to Y265 has biased composition (basic and acidic residues). Residue S353 is modified to Phosphoserine.

It belongs to the grh/CP2 family. CP2 subfamily. In terms of assembly, binds to DNA as a dimer, isoform 3 does not bind to DNA or affect the binding of isoform 1 to DNA. Interacts with UBP1 and PIAS1, and is probably part of a complex containing TFCP2, UBP1 and PIAS1. Component of the SSP (stage selector protein) complex, which appears to be a heteromer of TFCP2 and 2 copies of NFE4. As to expression, ubiquitous. Expressed in brain, ovary, kidney, thymus, spleen, liver, adrenal, heart and lung (at protein level).

It localises to the nucleus. Its function is as follows. Binds a variety of cellular and viral promoters including fibrinogen, alpha-globin, SV40 and HIV-1 promoters. Activation of the alpha-globin promoter in erythroid cells is via synergistic interaction with UBP1. Functions as part of the SSP (stage selector protein) complex. Facilitates the interaction of the gamma-globin genes with enhancer elements contained in the locus control region in fetal erythroid cells. Interacts by binding to the stage selector element (SSE) in the proximal gamma-globin promoter. This Homo sapiens (Human) protein is Alpha-globin transcription factor CP2 (TFCP2).